A 503-amino-acid polypeptide reads, in one-letter code: Efflux pump vrtL (503 aa).

Residues 1 to 59 (MSKLSDNHSSASEGEKEAGDLESGPTAISSEPSFDDADRDPNLITWDGPKDPENPKNWP) form a disordered region. N-linked (GlcNAc...) asparagine glycosylation occurs at asparagine 7. The next 12 helical transmembrane spans lie at 68 to 88 (WTVS…APAM), 101 to 121 (IEIY…PIFF), 133 to 153 (LLQI…FATT), 162 to 182 (FLAG…ISDM), 194 to 214 (VYTL…GFIA), 221 to 241 (WVFW…FFWL), 295 to 315 (IVFC…LMFA), 329 to 349 (PGIG…GLFF), 377 to 397 (SLAV…WSIG), 401 to 421 (WIMP…CLQG), 432 to 454 (TYAA…GFPL), and 471 to 491 (LLAF…WHFG).

Belongs to the major facilitator superfamily.

The protein localises to the membrane. Functionally, efflux pump; part of the gene cluster that mediates the biosynthesis of viridicatumtoxin, a tetracycline-like fungal meroterpenoid with a unique, fused spirobicyclic ring system. The chain is Efflux pump vrtL from Penicillium aethiopicum.